Consider the following 168-residue polypeptide: 6,7-dimethyl-8-ribityllumazine synthase (168 aa).

5-amino-6-(D-ribitylamino)uracil is bound by residues Trp-31, 65–67, and 89–91; these read SFE and CVV. (2S)-2-hydroxy-3-oxobutyl phosphate is bound at residue 94 to 95; it reads DT. Catalysis depends on His-97, which acts as the Proton donor. Tyr-122 is a binding site for 5-amino-6-(D-ribitylamino)uracil. Residue Arg-136 participates in (2S)-2-hydroxy-3-oxobutyl phosphate binding.

Belongs to the DMRL synthase family.

The catalysed reaction is (2S)-2-hydroxy-3-oxobutyl phosphate + 5-amino-6-(D-ribitylamino)uracil = 6,7-dimethyl-8-(1-D-ribityl)lumazine + phosphate + 2 H2O + H(+). The protein operates within cofactor biosynthesis; riboflavin biosynthesis; riboflavin from 2-hydroxy-3-oxobutyl phosphate and 5-amino-6-(D-ribitylamino)uracil: step 1/2. Functionally, catalyzes the formation of 6,7-dimethyl-8-ribityllumazine by condensation of 5-amino-6-(D-ribitylamino)uracil with 3,4-dihydroxy-2-butanone 4-phosphate. This is the penultimate step in the biosynthesis of riboflavin. This Phocaeicola vulgatus (strain ATCC 8482 / DSM 1447 / JCM 5826 / CCUG 4940 / NBRC 14291 / NCTC 11154) (Bacteroides vulgatus) protein is 6,7-dimethyl-8-ribityllumazine synthase.